The sequence spans 492 residues: WD repeat-containing protein JIP5 (492 aa).

WD repeat units follow at residues 127 to 166, 178 to 217, 236 to 274, 276 to 317, and 365 to 405; these read RHKG…VVKK, KKND…LSNS, RSAY…ILIS, DQED…LEDQ, and RNHS…VEEN. Composition is skewed to acidic residues over residues 404–414 and 422–433; these read ENASVESDSDE and DLSDDTSSDDET. Positions 404–472 are disordered; it reads ENASVESDSD…SKSVKKRKIM (69 aa). Basic and acidic residues predominate over residues 449-462; the sequence is KDLKEDHQEEKESN.

Interacts with BUD27 and GIS1.

Its subcellular location is the nucleus. It localises to the nucleolus. The sequence is that of WD repeat-containing protein JIP5 (JIP5) from Saccharomyces cerevisiae (strain ATCC 204508 / S288c) (Baker's yeast).